The sequence spans 563 residues: Protein NOXP20 (563 aa).

A disordered region spans residues 1–84; sequence MSDDAGDTLA…ANALEPPLNG (84 aa). Positions 56 to 68 are enriched in low complexity; sequence AAVQGAGAAAIGP. The residue at position 120 (S120) is a Phosphoserine. The tract at residues 165-206 is disordered; sequence VNSGSSEGAQPNTENGVPEITDAATDQGPAESPPTSPSSASR. Positions 166–179 are enriched in polar residues; the sequence is NSGSSEGAQPNTEN. Phosphothreonine is present on residues T185 and T189. A Phosphoserine modification is found at S196. T199 is modified (phosphothreonine). Phosphoserine is present on residues S202 and S261. Residues 343-367 adopt a coiled-coil conformation; that stretch reads AAKELENEENQEEQGLEEKGEEFAR. Positions 411–436 are disordered; it reads SEEETKKEEKEEKSQDPQEDKKEEKK.

Belongs to the FAM114 family.

The protein localises to the cytoplasm. May play a role in neuronal cell development. This Homo sapiens (Human) protein is Protein NOXP20 (FAM114A1).